We begin with the raw amino-acid sequence, 93 residues long: Auxin-responsive protein SAUR26 (93 aa).

Belongs to the ARG7 family. In terms of assembly, interacts with PP2C-D1. As to expression, higher expression in thermo-responsive cultivars (e.g. cv. Alst-1, cv. Ang-0 and cv. Com-0) than in low thermo-responsive cultivars (e.g. cv. Dja-1, cv. El-0 and cv. Kon).

Its subcellular location is the cell membrane. In terms of biological role, provide a mechanistic link between auxin and plasma membrane H(+)-ATPases (PM H(+)-ATPases, e.g. AHA1 and AHA2), and triggers PM H(+)-ATPases activity by promoting phosphorylation of their C-terminal autoinhibitory domain as a result of PP2C-D subfamily of type 2C phosphatases inhibition, thus leading to the acidification of the apoplast and the facilitation of solutes and water uptake to drive cell expansion. Functions as a positive effectors of cell expansion through modulation of auxin transport. Involved in thermo-responsiveness of plant architecture. Enhances plasma membrane H(+)-ATPase. Probably involved in light intensity mediated root development. The chain is Auxin-responsive protein SAUR26 from Arabidopsis thaliana (Mouse-ear cress).